Reading from the N-terminus, the 86-residue chain is MTLQDLIDKLLGRQPASADTARQRLQLVLAHDRSDLNPELLDQMRREILEVVSRYVEIDLSEGDVSLETEDRVTALVANLPIRRTL.

The protein belongs to the MinE family.

Its function is as follows. Prevents the cell division inhibition by proteins MinC and MinD at internal division sites while permitting inhibition at polar sites. This ensures cell division at the proper site by restricting the formation of a division septum at the midpoint of the long axis of the cell. This Parasynechococcus marenigrum (strain WH8102) protein is Cell division topological specificity factor.